Here is a 281-residue protein sequence, read N- to C-terminus: Small ribosomal subunit protein uS2 (281 aa).

The disordered stretch occupies residues 225-281 (LMERKAEKPEEEETEEAAPRRERRARSGARRSRQNENEATAEAATEVAEAPEAEEAE). A compositionally biased stretch (basic residues) spans 245 to 256 (RERRARSGARRS). The span at 262-272 (EATAEAATEVA) shows a compositional bias: low complexity.

It belongs to the universal ribosomal protein uS2 family.

This Porphyromonas gingivalis (strain ATCC 33277 / DSM 20709 / CIP 103683 / JCM 12257 / NCTC 11834 / 2561) protein is Small ribosomal subunit protein uS2.